The primary structure comprises 515 residues: Maturase K (515 aa).

It belongs to the intron maturase 2 family. MatK subfamily.

Its subcellular location is the plastid. It is found in the chloroplast. Functionally, usually encoded in the trnK tRNA gene intron. Probably assists in splicing its own and other chloroplast group II introns. The sequence is that of Maturase K from Pinus elliottii (Slash pine).